Consider the following 205-residue polypeptide: Cerebellin-3 (205 aa).

A signal peptide spans 1 to 32; it reads MLGAKPHWLPGPLHSPGLPLVLVLLALGAGWA. The C1q domain maps to 67–205; the sequence is APPGRVAFAA…SFSGFLIFPL (139 aa). A necessary for interaction with CBLN3, and homotrimerization region spans residues 72–205; that stretch reads VAFAAVRSHH…SFSGFLIFPL (134 aa). Asn90 carries an N-linked (GlcNAc...) asparagine glycan.

In terms of assembly, heterohexamer; disulfide-linked heterotrimers. Interacts with CBLN1. May also form oligomers with CBLN2 and CBLN4.

It localises to the endoplasmic reticulum. Its subcellular location is the golgi apparatus. The protein localises to the cis-Golgi network. The protein resides in the secreted. It is found in the synapse. Its function is as follows. May be involved in synaptic functions in the CNS. The sequence is that of Cerebellin-3 (CBLN3) from Homo sapiens (Human).